The sequence spans 616 residues: D-glutamate cyclase, mitochondrial (616 aa).

Residues 1 to 28 (MPFTLHLRSRLPSAIRSLILQKKPNIRN) constitute a mitochondrion transit peptide.

This sequence belongs to the D-glutamate cyclase family.

The protein localises to the mitochondrion matrix. The catalysed reaction is D-glutamate = 5-oxo-D-proline + H2O. Its function is as follows. D-glutamate cyclase that converts D-glutamate to 5-oxo-D-proline. The polypeptide is D-glutamate cyclase, mitochondrial (Homo sapiens (Human)).